The sequence spans 423 residues: Adenylosuccinate synthetase (423 aa).

GTP-binding positions include 12-18 (GDEGKGK) and 40-42 (GHT). Asp13 serves as the catalytic Proton acceptor. Residues Asp13 and Gly40 each contribute to the Mg(2+) site. IMP is bound by residues 13–16 (DEGK), 38–41 (NAGH), Thr129, Arg143, Gln224, Thr239, and Arg303. The Proton donor role is filled by His41. Residue 299-305 (SVTGRQR) participates in substrate binding. GTP is bound by residues Arg305, 331–333 (KGD), and 412–414 (SVG).

The protein belongs to the adenylosuccinate synthetase family. In terms of assembly, homodimer. The cofactor is Mg(2+).

Its subcellular location is the cytoplasm. The enzyme catalyses IMP + L-aspartate + GTP = N(6)-(1,2-dicarboxyethyl)-AMP + GDP + phosphate + 2 H(+). The protein operates within purine metabolism; AMP biosynthesis via de novo pathway; AMP from IMP: step 1/2. Functionally, plays an important role in the de novo pathway of purine nucleotide biosynthesis. Catalyzes the first committed step in the biosynthesis of AMP from IMP. The protein is Adenylosuccinate synthetase of Flavobacterium psychrophilum (strain ATCC 49511 / DSM 21280 / CIP 103535 / JIP02/86).